Reading from the N-terminus, the 632-residue chain is 2-hydroxyacyl-CoA lyase 2 (632 aa).

A helical membrane pass occupies residues 13–33; the sequence is LFPSFLLLACGTLVAALLGAA. Glu-98 lines the thiamine diphosphate pocket. The segment at 470 to 550 is thiamine pyrophosphate binding; it reads DFVGTAAHLV…VMALVGNDAG (81 aa). Mg(2+) is bound by residues Asp-521 and Asn-547.

It belongs to the TPP enzyme family. The cofactor is Mg(2+). Requires thiamine diphosphate as cofactor. In terms of tissue distribution, expressed in all tissues tested, with highest expression in heart, pancreas and placenta.

The protein localises to the endoplasmic reticulum membrane. The catalysed reaction is 2-hydroxyoctadecanoyl-CoA = heptadecanal + formyl-CoA. It catalyses the reaction (2R)-hydroxyhexadecanoyl-CoA = pentadecanal + formyl-CoA. In terms of biological role, endoplasmic reticulum 2-OH acyl-CoA lyase involved in the cleavage (C1 removal) reaction in the fatty acid alpha-oxydation in a thiamine pyrophosphate (TPP)-dependent manner. Involved in the phytosphingosine degradation pathway. This Homo sapiens (Human) protein is 2-hydroxyacyl-CoA lyase 2.